The chain runs to 244 residues: 5-oxoprolinase subunit A (244 aa).

Belongs to the LamB/PxpA family. In terms of assembly, forms a complex composed of PxpA, PxpB and PxpC.

The catalysed reaction is 5-oxo-L-proline + ATP + 2 H2O = L-glutamate + ADP + phosphate + H(+). Catalyzes the cleavage of 5-oxoproline to form L-glutamate coupled to the hydrolysis of ATP to ADP and inorganic phosphate. The polypeptide is 5-oxoprolinase subunit A (Salmonella choleraesuis (strain SC-B67)).